Here is a 420-residue protein sequence, read N- to C-terminus: tRNA(Ile)-lysidine synthase (420 aa).

Position 28-33 (28-33 (SGGLDS)) interacts with ATP.

This sequence belongs to the tRNA(Ile)-lysidine synthase family.

The protein localises to the cytoplasm. It carries out the reaction cytidine(34) in tRNA(Ile2) + L-lysine + ATP = lysidine(34) in tRNA(Ile2) + AMP + diphosphate + H(+). Ligates lysine onto the cytidine present at position 34 of the AUA codon-specific tRNA(Ile) that contains the anticodon CAU, in an ATP-dependent manner. Cytidine is converted to lysidine, thus changing the amino acid specificity of the tRNA from methionine to isoleucine. The sequence is that of tRNA(Ile)-lysidine synthase from Hydrogenovibrio crunogenus (strain DSM 25203 / XCL-2) (Thiomicrospira crunogena).